The chain runs to 465 residues: 3-isopropylmalate dehydratase large subunit (465 aa).

3 residues coordinate [4Fe-4S] cluster: C346, C406, and C409.

This sequence belongs to the aconitase/IPM isomerase family. LeuC type 1 subfamily. Heterodimer of LeuC and LeuD. Requires [4Fe-4S] cluster as cofactor.

It catalyses the reaction (2R,3S)-3-isopropylmalate = (2S)-2-isopropylmalate. The protein operates within amino-acid biosynthesis; L-leucine biosynthesis; L-leucine from 3-methyl-2-oxobutanoate: step 2/4. Catalyzes the isomerization between 2-isopropylmalate and 3-isopropylmalate, via the formation of 2-isopropylmaleate. In Psychromonas ingrahamii (strain DSM 17664 / CCUG 51855 / 37), this protein is 3-isopropylmalate dehydratase large subunit.